The following is a 390-amino-acid chain: uncharacterized protein (390 aa).

Belongs to the glycosyltransferase group 1 family. Glycosyltransferase 4 subfamily.

This is an uncharacterized protein from Methanocaldococcus jannaschii (strain ATCC 43067 / DSM 2661 / JAL-1 / JCM 10045 / NBRC 100440) (Methanococcus jannaschii).